Here is a 716-residue protein sequence, read N- to C-terminus: Fatty acid oxidation complex subunit alpha (716 aa).

The interval 1–189 is enoyl-CoA hydratase/isomerase; sequence MIYQSPTIQV…KVGAIDAVVA (189 aa). Position 296 (D296) interacts with substrate. Residues 311-716 form a 3-hydroxyacyl-CoA dehydrogenase region; that stretch reads QAVNSAAVLG…AATNGSYYPA (406 aa). NAD(+) contacts are provided by residues M324, D343, 400–402, K407, and S429; that span reads VVE. H450 acts as the For 3-hydroxyacyl-CoA dehydrogenase activity in catalysis. Residue N453 participates in NAD(+) binding. Positions 500 and 660 each coordinate substrate.

It in the N-terminal section; belongs to the enoyl-CoA hydratase/isomerase family. In the C-terminal section; belongs to the 3-hydroxyacyl-CoA dehydrogenase family. In terms of assembly, heterotetramer of two alpha chains (FadB) and two beta chains (FadA).

It carries out the reaction a (3S)-3-hydroxyacyl-CoA + NAD(+) = a 3-oxoacyl-CoA + NADH + H(+). The enzyme catalyses a (3S)-3-hydroxyacyl-CoA = a (2E)-enoyl-CoA + H2O. It catalyses the reaction a 4-saturated-(3S)-3-hydroxyacyl-CoA = a (3E)-enoyl-CoA + H2O. The catalysed reaction is (3S)-3-hydroxybutanoyl-CoA = (3R)-3-hydroxybutanoyl-CoA. It carries out the reaction a (3Z)-enoyl-CoA = a 4-saturated (2E)-enoyl-CoA. The enzyme catalyses a (3E)-enoyl-CoA = a 4-saturated (2E)-enoyl-CoA. It functions in the pathway lipid metabolism; fatty acid beta-oxidation. Its function is as follows. Involved in the aerobic and anaerobic degradation of long-chain fatty acids via beta-oxidation cycle. Catalyzes the formation of 3-oxoacyl-CoA from enoyl-CoA via L-3-hydroxyacyl-CoA. It can also use D-3-hydroxyacyl-CoA and cis-3-enoyl-CoA as substrate. The sequence is that of Fatty acid oxidation complex subunit alpha from Shewanella loihica (strain ATCC BAA-1088 / PV-4).